The primary structure comprises 118 residues: BET1 homolog (118 aa).

The Cytoplasmic portion of the chain corresponds to 1-94 (MRRAGLGEGV…LKILSRGSQT (94 aa)). One can recognise a t-SNARE coiled-coil homology domain in the interval 26 to 88 (SACEEENERL…GKTMGKLKIL (63 aa)). Ser-50 bears the Phosphoserine mark. The helical; Anchor for type IV membrane protein transmembrane segment at 95–115 (KLLCYMMLFSLFVFFIIYWII) threads the bilayer. Topologically, residues 116–118 (KLR) are vesicular.

The protein belongs to the BET1 family. As to quaternary structure, interacts with SNARE complex members GOSR2, SEC22B and STX5. Interacts with LMAN1/ERGIC53. Interacts with STX17. In terms of tissue distribution, expressed in muscle.

The protein resides in the endoplasmic reticulum membrane. It localises to the golgi apparatus. Its subcellular location is the cis-Golgi network membrane. The protein localises to the golgi apparatus membrane. Required for vesicular transport from the ER to the Golgi complex. Functions as a SNARE involved in the docking process of ER-derived vesicles with the cis-Golgi membrane. In Homo sapiens (Human), this protein is BET1 homolog (BET1).